Reading from the N-terminus, the 526-residue chain is Alpha-N-acetylgalactosaminide alpha-2,6-sialyltransferase 1 (526 aa).

At 1-12 (MTRYCRGLSQRQ) the chain is on the cytoplasmic side. The chain crosses the membrane as a helical; Signal-anchor for type II membrane protein span at residues 13–33 (AFLLLTVLALLFILLFVVKDP). At 34-526 (RAKDSRCQFI…QRPQSDKAKN (493 aa)) the chain is on the lumenal side. Residues 49 to 182 (SAQENQQKAE…TRRRQRLKAS (134 aa)) are disordered. The segment covering 81–106 (KDLKKQEREAVQGEQAEGKEKRKLET) has biased composition (basic and acidic residues). Polar residues predominate over residues 161–171 (ATKSPASSPHP). 5 N-linked (GlcNAc...) asparagine glycosylation sites follow: Asn-206, Asn-228, Asn-259, Asn-303, and Asn-388. Disulfide bonds link Cys-207–Cys-290 and Cys-293–Cys-461.

It belongs to the glycosyltransferase 29 family. Glycosylated; autosialylated. Submaxillary gland, mammary gland, spleen and colon.

The protein localises to the golgi apparatus membrane. It catalyses the reaction a beta-D-galactosyl-(1-&gt;3)-N-acetyl-alpha-D-galactosaminyl derivative + CMP-N-acetyl-beta-neuraminate = a beta-D-galactosyl-(1-&gt;3)-[N-acetyl-alpha-neuraminyl-(2-&gt;6)]-N-acetyl-alpha-D-galactosaminyl derivative + CMP + H(+). The enzyme catalyses a 3-O-[N-acetyl-alpha-D-galactosaminyl]-L-seryl-[protein] + CMP-N-acetyl-beta-neuraminate = a 3-O-[N-acetyl-alpha-neuraminosyl-(2-&gt;6)-N-acetyl-alpha-D-galactosaminyl]-L-seryl-[protein] + CMP + H(+). It carries out the reaction a 3-O-[N-acetyl-alpha-D-galactosaminyl]-L-threonyl-[protein] + CMP-N-acetyl-beta-neuraminate = a 3-O-[N-acetyl-alpha-neuraminosyl-(2-&gt;6)-N-acetyl-alpha-D-galactosaminyl]-L-threonyl-[protein] + CMP + H(+). The catalysed reaction is a 3-O-[beta-D-galactosyl-(1-&gt;3)-N-acetyl-alpha-D-galactosaminyl]-L-seryl-[protein] + CMP-N-acetyl-beta-neuraminate = a 3-O-{beta-D-galactosyl-(1-&gt;3)-[N-acetyl-alpha-neuraminosyl-(2-&gt;6)]-N-acetyl-alpha-D-galactosaminyl}-L-seryl-[protein] + CMP + H(+). It catalyses the reaction a 3-O-[beta-D-galactosyl-(1-&gt;3)-N-acetyl-alpha-D-galactosaminyl]-L-threonyl-[protein] + CMP-N-acetyl-beta-neuraminate = a 3-O-{beta-D-galactosyl-(1-&gt;3)-[N-acetyl-alpha-neuraminosyl-(2-&gt;6)]-N-acetyl-alpha-D-galactosaminyl}-L-threonyl-[protein] + CMP + H(+). The enzyme catalyses a 3-O-[N-acetyl-alpha-neuraminyl-(2-&gt;3)-beta-D-galactosyl-(1-&gt;3)-N-acetyl-alpha-D-galactosaminyl]-L-threonyl-[protein] + CMP-N-acetyl-beta-neuraminate = a 3-O-{alpha-Neu5Ac-(2-&gt;3)-beta-D-Gal-(1-&gt;3)-[alpha-Neu5Ac-(2-&gt;6)]-alpha-D-GalNAc}-L-threonyl-[protein] + CMP + H(+). It functions in the pathway protein modification; protein glycosylation. Its function is as follows. Protein sialyltransferase specifically expressed in goblet cells that plays a key role in intestinal host-commensal homeostasis. Conjugates sialic acid with an alpha-2-6 linkage to N-acetylgalactosamine (GalNAc) glycan chains linked to serine or threonine in glycoproteins. Catalyzes the formation of the sialyl-Tn (S-Tn) antigen, an antigen found in intestinal goblet cells. Protein sialylation in globlet cells is essential for mucus integrity and is required to protect the intestinal mucus against excessive bacterial proteolytic degradation. The polypeptide is Alpha-N-acetylgalactosaminide alpha-2,6-sialyltransferase 1 (Mus musculus (Mouse)).